The following is a 433-amino-acid chain: Bifunctional urease accessory protein UreEF (433 aa).

The interval 1-200 (MKIANTFIKR…VMATAASTAS (200 aa)) is urease accessory protein UreE. The interval 200–433 (SMTPSLDAGQ…ETQFSRLFRS (234 aa)) is urease accessory protein UreF.

In the N-terminal section; belongs to the UreE family. The protein in the C-terminal section; belongs to the UreF family. As to quaternary structure, ureD, UreF and UreG form a complex that acts as a GTP-hydrolysis-dependent molecular chaperone, activating the urease apoprotein by helping to assemble the nickel containing metallocenter of UreC. The UreE protein probably delivers the nickel.

It is found in the cytoplasm. Functionally, involved in urease metallocenter assembly. Binds nickel. Probably functions as a nickel donor during metallocenter assembly. Its function is as follows. Required for maturation of urease via the functional incorporation of the urease nickel metallocenter. This Bordetella bronchiseptica (Alcaligenes bronchisepticus) protein is Bifunctional urease accessory protein UreEF (ureEF).